Consider the following 376-residue polypeptide: N-acetyldiaminopimelate deacetylase (376 aa).

Asp69 is a catalytic residue. Glu128 serves as the catalytic Proton acceptor.

The protein belongs to the peptidase M20A family. N-acetyldiaminopimelate deacetylase subfamily.

It carries out the reaction N-acetyl-(2S,6S)-2,6-diaminopimelate + H2O = (2S,6S)-2,6-diaminopimelate + acetate. The protein operates within amino-acid biosynthesis; L-lysine biosynthesis via DAP pathway; LL-2,6-diaminopimelate from (S)-tetrahydrodipicolinate (acetylase route): step 3/3. Catalyzes the conversion of N-acetyl-diaminopimelate to diaminopimelate and acetate. This Streptococcus pneumoniae (strain 70585) protein is N-acetyldiaminopimelate deacetylase.